The sequence spans 111 residues: Nucleoid-associated protein CT0805 (111 aa).

Belongs to the YbaB/EbfC family. In terms of assembly, homodimer.

The protein localises to the cytoplasm. The protein resides in the nucleoid. Binds to DNA and alters its conformation. May be involved in regulation of gene expression, nucleoid organization and DNA protection. The protein is Nucleoid-associated protein CT0805 of Chlorobaculum tepidum (strain ATCC 49652 / DSM 12025 / NBRC 103806 / TLS) (Chlorobium tepidum).